A 736-amino-acid chain; its full sequence is Myosin-7 (736 aa).

The 342-residue stretch at 1–342 (NWMVTRINAT…LLGLLEEMRD (342 aa)) folds into the Myosin motor domain. The actin-binding stretch occupies residues 219–241 (LNKLMTNLRSTHPHFVRCIIPNE). Residues 345 to 374 (LSRIITRIQAQSRGVLSRMEYKKLLERRDS) form the IQ domain. The stretch at 403-736 (LLKSAETEKE…MNKKREAEFQ (334 aa)) forms a coiled coil. Ser701 carries the post-translational modification Phosphoserine. Residues 716–736 (EAGGATSVQIEMNKKREAEFQ) are disordered. The span at 727–736 (MNKKREAEFQ) shows a compositional bias: basic and acidic residues.

The protein belongs to the TRAFAC class myosin-kinesin ATPase superfamily. Myosin family. As to quaternary structure, muscle myosin is a hexameric protein that consists of 2 heavy chain subunits (MHC), 2 alkali light chain subunits (MLC) and 2 regulatory light chain subunits (MLC-2). Interacts with ECPAS. Interacts (via C-terminus) with LRRC39.

It localises to the cytoplasm. It is found in the myofibril. Its subcellular location is the sarcomere. Its function is as follows. Myosins are actin-based motor molecules with ATPase activity essential for muscle contraction. Forms regular bipolar thick filaments that, together with actin thin filaments, constitute the fundamental contractile unit of skeletal and cardiac muscle. The polypeptide is Myosin-7 (MYH7) (Oryctolagus cuniculus (Rabbit)).